A 520-amino-acid chain; its full sequence is GMP synthase [glutamine-hydrolyzing] (520 aa).

The Glutamine amidotransferase type-1 domain occupies 12–205; it reads KIIVLDYGSQ…AISICGARGD (194 aa). The active-site Nucleophile is the C89. Residues H179 and E181 contribute to the active site. Residues 206 to 395 enclose the GMPS ATP-PPase domain; that stretch reads WSMDNFIDME…LGMPEEIVWR (190 aa). 233–239 provides a ligand contact to ATP; the sequence is SGGVDSS.

In terms of assembly, homodimer.

The catalysed reaction is XMP + L-glutamine + ATP + H2O = GMP + L-glutamate + AMP + diphosphate + 2 H(+). It participates in purine metabolism; GMP biosynthesis; GMP from XMP (L-Gln route): step 1/1. Catalyzes the synthesis of GMP from XMP. The sequence is that of GMP synthase [glutamine-hydrolyzing] from Streptococcus pyogenes serotype M5 (strain Manfredo).